A 344-amino-acid chain; its full sequence is Protein BREVIS RADIX (344 aa).

The BRX 1 domain occupies 139-194 (KEWMAQVEPGVHITFASLPTGGNDLKRIRFSREMFDKWQAQRWWGENYDKIVELYN). The tract at residues 203–286 (LQTPARSDDQ…DPPSMSNASE (84 aa)) is disordered. Residues 223–233 (DSARESKDWTP) are compositionally biased toward basic and acidic residues. Residues 248–264 (YGGSSNYGPGSYHGGPP) show a composition bias toward low complexity. In terms of domain architecture, BRX 2 spans 289 to 344 (AEWIEEDEPGVYITIRQLSDGTRELRRVRFSRERFGEVHAKTWWEQNRERIQTQYL).

It belongs to the BRX family. In terms of assembly, homodimer and heterodimer with BRXL1. Interacts with NGA1 and ARF5. As to expression, expressed in the developing protophloem up to the elongation zone in root meristem of young seedlings, in the columella and the phloem vasculature throughout the root and in the phloem vasculature in the shoot. Detected in the shoot meristem and in primordia. Low expression in stomata. Confined to sieve element precursor cells and to protophloem.

The protein localises to the nucleus. The protein resides in the cell membrane. Its function is as follows. Acts as a regulator of cell proliferation and elongation in the root and shoot. Regulates roots architecture and primary root protophloem differentiation. BRX, BAM3, and CLE45 act together to regulate the transition of protophloem cells from proliferation to differentiation, thus impinging on postembryonic growth capacity of the root meristem. Probable transcription regulator. Regulated by the auxin response factor ARF5. Polarly localized in vascular cells and subject to endocytic recycling. Required for CPD expression and for correct nuclear auxin response. Mediates cross-talk between the auxin and brassinosteroid pathways. BRX is a target for auxin-induced, proteasome-mediated degradation. This Arabidopsis thaliana (Mouse-ear cress) protein is Protein BREVIS RADIX.